The following is a 523-amino-acid chain: MRALFSSPAADTAGQQEALAVPLARLRFAAPLAALLGVMHTLAFAPNRWWWLQILSLAGLAALVRQAPRLRDVAWVGYAFGLGWFLSGIWWLYISMHVYGDMPAWMAAAAVLLFSAYLALHPALAAWLWQRLARGRQLSGAASALVFGAAWLVSEWLRGTEWTGFPWLNGGYAHTDGPLAGYAPLVGVYGVVAIAATLAGLLCAAAERRLHWLAGLAGVAVLAAGWPLHTIAWTQPVGKPITVRLLQGNVPQDVKFQQTGIDHSLALYTKMVTEQPAQLVVTPETAFPILLQDMPQEIALAIRTYVDTTGSSVLFGAANADSAVDYTNSAFGVGPWFKGVYRYDKHHLVPFGEFIPFGFHWFVHMMNMPLGDFRRGLPVQPPMPVAGQRVAPNICYEDLFGEEIAASLRQAERPATMLANVTNLAWFGDTIALDQHLQISRMRALESGRPMLRATNTGATAVVRPDGSVQARLPVFTLGTLQADVQGMQGLTPFVRTGNAPALGAGVLVLLAALARRRRAGAA.

The next 7 helical transmembrane spans lie at 26-46, 49-66, 74-94, 109-129, 137-157, 185-205, and 212-232; these read LRFAAPLAALLGVMHTLAFAP, WWWLQILSLAGLAALVRQ, AWVGYAFGLGWFLSGIWWLYI, AAVLLFSAYLALHPALAAWLW, QLSGAASALVFGAAWLVSEWL, LVGVYGVVAIAATLAGLLCAA, and WLAGLAGVAVLAAGWPLHTIA. The CN hydrolase domain occupies 246-487; that stretch reads LQGNVPQDVK…LGTLQADVQG (242 aa). Residue glutamate 284 is the Proton acceptor of the active site. Lysine 345 is a catalytic residue. Cysteine 395 serves as the catalytic Nucleophile. Residues 494-514 form a helical membrane-spanning segment; it reads FVRTGNAPALGAGVLVLLAAL.

Belongs to the CN hydrolase family. Apolipoprotein N-acyltransferase subfamily.

It localises to the cell inner membrane. The catalysed reaction is N-terminal S-1,2-diacyl-sn-glyceryl-L-cysteinyl-[lipoprotein] + a glycerophospholipid = N-acyl-S-1,2-diacyl-sn-glyceryl-L-cysteinyl-[lipoprotein] + a 2-acyl-sn-glycero-3-phospholipid + H(+). It functions in the pathway protein modification; lipoprotein biosynthesis (N-acyl transfer). In terms of biological role, catalyzes the phospholipid dependent N-acylation of the N-terminal cysteine of apolipoprotein, the last step in lipoprotein maturation. This is Apolipoprotein N-acyltransferase from Ralstonia nicotianae (strain ATCC BAA-1114 / GMI1000) (Ralstonia solanacearum).